A 536-amino-acid chain; its full sequence is MKQGTTGMYCEVGPCTNAKDAHSPCLRPPGYAKPPTVRVCRTRGHNLPLSKVPGPKLAALTKWYGFYHNVIRDGQYSLSFSSLHKKYDSPVIRIGPNAVHVDDPSFYQEMFSMTTKYYKEPEFYKALGAEGAMASILDPKHHRMYRNHLRPLFASRAVDGVVPRLKLELEKATRIFDMHRKDYHPLNIQALYRSFTSDMVCELLFGESPDFIGDGNGYHPFVAALDRFTAFSWLVVYFPWVKSIQFHLPFGLGDKLAPEFNDFKRQCETWEAKAQLKRESGVQVGQKNLFDYYAELGAGPETAVSGVAQPVEDAFNFLTAGTESTAYTLSSTAFHILNNPQVFKKLHEELDASVDFIRNDFNAKQIQALPYLGAVLKETMRLSTAVPGNLPRLVPPGGVTVGSVYLPEGTYPQQTIVSSSHLSIITNDTIFHDPYKFKPERWLGEEGKDLERWHVGFSRGPRRCIGSSLAYLELFCVTAYVFSRFEMSLFETDESSMQWVDRISARNRKDVQVRILSDRWEKEAHSIAGGTLLKEE.

C464 contributes to the heme binding site.

It belongs to the cytochrome P450 family. It depends on heme as a cofactor.

The protein operates within alkaloid biosynthesis. Its function is as follows. Cytochrome P450 monooxygenase; part of the gene cluster that mediates the biosynthesis of paraherquamide, a fungal indole alkaloid that belongs to a family of natural products containing a characteristic bicyclo[2.2.2]diazaoctane core. The first steps in the biosynthesis of paraherquamide is the production of the beta-methyl-proline precursor from L-isoleucine. They require oxidation of a terminally hydroxylated L-isoleucine to the corresponding aldehyde by enzymes which have still to be identified. Spontaneous cyclization and dehydration would yield the 4-methyl pyrolline-5-carboxylic acid, which is then reduced by the pyrroline-5-carboxylate reductase phqD leading to the beta-methyl-proline precursor. The next step of paraherquamide biosynthesis involves coupling of beta-methyl-proline and L-tryptophan by the bimodular NRPS phqB, to produce a monooxopiperazine intermediate. The reductase (R) domain of phqB utilizes NADPH for hydride transfer to reduce the thioester bond of the T domain-tethered linear dipeptide to a hemithioaminal intermediate, which spontaneously cleaves the C-S bond to release the aldehyde product. This compound undergoes spontaneous cyclization and dehydration to give a dienamine which is reverse prenylated at C-2 by the reverse prenyltransferase phqJ. The other prenyltransferase present in the cluster, phqI may be a redundant gene in the pathway. During biosynthetic assembly, the key step to produce the polycyclic core is catalyzed by the bifunctional reductase and intramolecular [4+2] Diels-Alderase, phqE, resulting in formation of the [2.2.2] diazaoctane intermediate preparaherquamide. Following formation of preparaherquamide, an indole 2,3-epoxidation-initiated pinacol-like rearrangement is catalyzed by the phqK FAD-dependent monooxygenase. The prenyltransferase phqA, the cytochrome P450 monooxygenase phqL, and the FAD-linked oxidoreductase phqH (or the cytochrome P450 monooxygenase phqM), are proposed to be involved in the formation of the pyran ring. The FAD-dependent monooxygenase phqK is likely responsible for generation of the spiro-oxindole, and the N-methylation is likely mediated by the phqN methyltransferase leading to the isolable natural product paraherquamide F. However, the order of these biosynthetic steps has still to be determined. In late-stage paraherquamide biosynthesis, the third P450 monooxygenase, phqO, is probably responsible for the C-14 hydroxylation, transforming paraherquamide F to paraherquamide G, and paraherquamide E to the final product paraherquamide A. The expansion from the 6-membered ring pyran (in paraherquamides F and G) to the 7-membered dioxepin ring (in paraherquamides A and E) represents a poorly understood but intriguing process that probably involves the 2-oxoglutarate-dependent dioxygenase phqC. Finally, the remaining members of the paraherquamide cluster, including phqI as well as phqM (or phqH), do not have a clearly prescribed role and appear to be redundant. The sequence is that of Cytochrome P450 monooxygenase phqM from Penicillium fellutanum.